Here is a 323-residue protein sequence, read N- to C-terminus: Sphingolipid delta(4)-desaturase/C4-monooxygenase DES2 (323 aa).

Glycine 2 is lipidated: N-myristoyl glycine. 2 consecutive transmembrane segments (helical) span residues 41–61 and 68–88; these read PHIK…CWLV and WLLF…TLAI. Residues 89–93 carry the Histidine box-1 motif; the sequence is HDISH. Residues 95–99 are required for C4-hydroxylase activity; it reads TAFGT. A Histidine box-2 motif is present at residues 128–132; it reads HVDHH. A helical membrane pass occupies residues 210 to 231; it reads VYLLGSSLLGLGLHPISGHFVA. The Histidine box-3 signature appears at 259 to 263; it reads HMEHH.

The protein belongs to the fatty acid desaturase type 1 family. DEGS subfamily. In terms of tissue distribution, highly expressed in intestinal crypt cells and adjacent epithelial cells (at protein level).

The protein resides in the endoplasmic reticulum membrane. It carries out the reaction a dihydroceramide + 2 Fe(II)-[cytochrome b5] + O2 + 2 H(+) = a phytoceramide + 2 Fe(III)-[cytochrome b5] + H2O. The catalysed reaction is an N-acylsphinganine + 2 Fe(II)-[cytochrome b5] + O2 + 2 H(+) = an N-acylsphing-4-enine + 2 Fe(III)-[cytochrome b5] + 2 H2O. It catalyses the reaction an N-acylsphinganine + 2 Fe(II)-[cytochrome b5] + O2 + 2 H(+) = an N-acyl-(4R)-4-hydroxysphinganine + 2 Fe(III)-[cytochrome b5] + H2O. The enzyme catalyses N-octanoylsphinganine + 2 Fe(II)-[cytochrome b5] + O2 + 2 H(+) = N-octanoyl-4-hydroxysphinganine + 2 Fe(III)-[cytochrome b5] + H2O. It functions in the pathway membrane lipid metabolism; sphingolipid biosynthesis. Bifunctional enzyme which acts both as a sphingolipid delta(4)-desaturase and a sphingolipid C4-monooxygenase. The sequence is that of Sphingolipid delta(4)-desaturase/C4-monooxygenase DES2 from Mus musculus (Mouse).